The following is a 451-amino-acid chain: Glycine--tRNA ligase (451 aa).

Substrate contacts are provided by Arg94 and Glu164. Residues 196–198 (RNE), 206–211 (FRTREF), 281–282 (EL), and 325–328 (GVER) contribute to the ATP site. Residue 211–215 (FEQME) participates in substrate binding. Residue 321 to 325 (EPSVG) participates in substrate binding.

This sequence belongs to the class-II aminoacyl-tRNA synthetase family. As to quaternary structure, homodimer.

Its subcellular location is the cytoplasm. The catalysed reaction is tRNA(Gly) + glycine + ATP = glycyl-tRNA(Gly) + AMP + diphosphate. Its function is as follows. Catalyzes the attachment of glycine to tRNA(Gly). The protein is Glycine--tRNA ligase of Mesoplasma florum (strain ATCC 33453 / NBRC 100688 / NCTC 11704 / L1) (Acholeplasma florum).